The sequence spans 240 residues: Probable metal transport system ATP-binding protein TM_0124 (240 aa).

The 220-residue stretch at 4–223 (VEVKNLTYRI…LKKIFTDFDI (220 aa)) folds into the ABC transporter domain. 36-43 (GPNGAGKT) contributes to the ATP binding site.

This sequence belongs to the ABC transporter superfamily.

Functionally, part of an ATP-driven transport system TM_0123/TM_0124/TM_0125 for a metal. Probably responsible for energy coupling to the transport system. This chain is Probable metal transport system ATP-binding protein TM_0124, found in Thermotoga maritima (strain ATCC 43589 / DSM 3109 / JCM 10099 / NBRC 100826 / MSB8).